The primary structure comprises 694 residues: Acetyl-coenzyme A synthetase (694 aa).

The tract at residues 1–23 (MSDKRPRSPCSNNNDELNDSSVL) is disordered. A compositionally biased stretch (polar residues) spans 9 to 23 (PCSNNNDELNDSSVL). CoA-binding positions include 229-232 (RGKK) and Thr-347. Residues 423-425 (GEP), 447-452 (DTYWQT), Asp-536, and Arg-551 each bind ATP. A CoA-binding site is contributed by Ser-559. Residue Arg-562 coordinates ATP. Residue Arg-628 participates in CoA binding.

Belongs to the ATP-dependent AMP-binding enzyme family.

It carries out the reaction acetate + ATP + CoA = acetyl-CoA + AMP + diphosphate. The polypeptide is Acetyl-coenzyme A synthetase (ACS) (Cryptosporidium parvum).